The chain runs to 292 residues: Alpha-soluble NSF attachment protein (292 aa).

It belongs to the SNAP family.

It localises to the cytoplasmic vesicle. The protein localises to the membrane. In terms of biological role, required for vesicular transport between the endoplasmic reticulum and the Golgi apparatus. Also between the endosome and phagosome. The chain is Alpha-soluble NSF attachment protein from Drosophila melanogaster (Fruit fly).